The primary structure comprises 85 residues: Large ribosomal subunit protein eL43 (85 aa).

A C4-type zinc finger spans residues 38–59; the sequence is CPVCGRKAVRRISTGIWQCQKC.

It belongs to the eukaryotic ribosomal protein eL43 family. Zn(2+) serves as cofactor.

In Thermococcus sibiricus (strain DSM 12597 / MM 739), this protein is Large ribosomal subunit protein eL43.